We begin with the raw amino-acid sequence, 141 residues long: Hemoglobin subunit alpha (141 aa).

One can recognise a Globin domain in the interval 1 to 141; that stretch reads VLSPADKSNV…VSTVLTSKYR (141 aa). Position 3 is a phosphoserine (S3). N6-succinyllysine is present on residues K7 and K11. K16 is modified (N6-acetyllysine; alternate). An N6-succinyllysine; alternate modification is found at K16. A Phosphotyrosine modification is found at Y24. S35 carries the phosphoserine modification. K40 carries the N6-succinyllysine modification. The residue at position 49 (S49) is a Phosphoserine. Residue H58 participates in O2 binding. Heme b is bound at residue H87. Residue S102 is modified to Phosphoserine. T108 is subject to Phosphothreonine. Phosphoserine occurs at positions 124 and 131. Phosphothreonine occurs at positions 134 and 137. S138 is subject to Phosphoserine.

This sequence belongs to the globin family. Heterotetramer of two alpha chains and two beta chains. As to expression, red blood cells.

Its function is as follows. Involved in oxygen transport from the lung to the various peripheral tissues. In terms of biological role, hemopressin acts as an antagonist peptide of the cannabinoid receptor CNR1. Hemopressin-binding efficiently blocks cannabinoid receptor CNR1 and subsequent signaling. This Saguinus mystax (Moustached tamarin) protein is Hemoglobin subunit alpha (HBA).